The primary structure comprises 537 residues: Pentatricopeptide repeat-containing protein At1g02370, mitochondrial (537 aa).

The transit peptide at 1 to 18 directs the protein to the mitochondrion; it reads MNFRNLIASGSRLGKRFC. PPR repeat units follow at residues 171–205, 206–240, 241–275, 277–307, 312–346, 347–377, and 382–416; these read HQST…NFVN, NSLP…GISP, CGVT…SEAK, TWNT…MEEK, NRDS…RPEV, NNLS…WESK, and DMRL…SKGP.

It belongs to the PPR family. P subfamily.

The protein resides in the mitochondrion. This is Pentatricopeptide repeat-containing protein At1g02370, mitochondrial from Arabidopsis thaliana (Mouse-ear cress).